We begin with the raw amino-acid sequence, 176 residues long: Probable DNA-directed RNA polymerase subunit delta (176 aa).

In terms of domain architecture, HTH HARE-type spans 14-81 (LSLIDVAHFI…GNNMWGLRAW (68 aa)). Disordered regions lie at residues 91–119 (VQTQ…VDYD) and 140–176 (DEDE…PEDK). Acidic residues-rich tracts occupy residues 105-119 (DDDD…VDYD) and 159-176 (TVED…PEDK).

This sequence belongs to the RpoE family. As to quaternary structure, RNAP is composed of a core of 2 alpha, a beta and a beta' subunits. The core is associated with a delta subunit and one of several sigma factors.

In terms of biological role, participates in both the initiation and recycling phases of transcription. In the presence of the delta subunit, RNAP displays an increased specificity of transcription, a decreased affinity for nucleic acids, and an increased efficiency of RNA synthesis because of enhanced recycling. The protein is Probable DNA-directed RNA polymerase subunit delta of Listeria welshimeri serovar 6b (strain ATCC 35897 / DSM 20650 / CCUG 15529 / CIP 8149 / NCTC 11857 / SLCC 5334 / V8).